The sequence spans 494 residues: Aspartyl/glutamyl-tRNA(Asn/Gln) amidotransferase subunit B (494 aa).

The protein belongs to the GatB/GatE family. GatB subfamily. In terms of assembly, heterotrimer of A, B and C subunits.

The enzyme catalyses L-glutamyl-tRNA(Gln) + L-glutamine + ATP + H2O = L-glutaminyl-tRNA(Gln) + L-glutamate + ADP + phosphate + H(+). It catalyses the reaction L-aspartyl-tRNA(Asn) + L-glutamine + ATP + H2O = L-asparaginyl-tRNA(Asn) + L-glutamate + ADP + phosphate + 2 H(+). Its function is as follows. Allows the formation of correctly charged Asn-tRNA(Asn) or Gln-tRNA(Gln) through the transamidation of misacylated Asp-tRNA(Asn) or Glu-tRNA(Gln) in organisms which lack either or both of asparaginyl-tRNA or glutaminyl-tRNA synthetases. The reaction takes place in the presence of glutamine and ATP through an activated phospho-Asp-tRNA(Asn) or phospho-Glu-tRNA(Gln). This is Aspartyl/glutamyl-tRNA(Asn/Gln) amidotransferase subunit B from Rhodopseudomonas palustris (strain BisB18).